Consider the following 176-residue polypeptide: NAD(P)H-quinone oxidoreductase subunit J (176 aa).

Positions 1–32 (MEKEGLAKSSDTSIKKEGFISQSLSKDGIPNQ) are disordered. Polar residues predominate over residues 20–32 (ISQSLSKDGIPNQ).

Belongs to the complex I 30 kDa subunit family. NDH-1 can be composed of about 15 different subunits; different subcomplexes with different compositions have been identified which probably have different functions.

Its subcellular location is the cellular thylakoid membrane. The catalysed reaction is a plastoquinone + NADH + (n+1) H(+)(in) = a plastoquinol + NAD(+) + n H(+)(out). It carries out the reaction a plastoquinone + NADPH + (n+1) H(+)(in) = a plastoquinol + NADP(+) + n H(+)(out). Its function is as follows. NDH-1 shuttles electrons from an unknown electron donor, via FMN and iron-sulfur (Fe-S) centers, to quinones in the respiratory and/or the photosynthetic chain. The immediate electron acceptor for the enzyme in this species is believed to be plastoquinone. Couples the redox reaction to proton translocation, and thus conserves the redox energy in a proton gradient. Cyanobacterial NDH-1 also plays a role in inorganic carbon-concentration. This chain is NAD(P)H-quinone oxidoreductase subunit J, found in Prochlorococcus marinus (strain MIT 9215).